The primary structure comprises 39 residues: Mating pheromone Er-11 (39 aa).

Intrachain disulfides connect cysteine 3-cysteine 19, cysteine 10-cysteine 34, and cysteine 15-cysteine 26.

Homodimer.

The protein localises to the secreted. In terms of biological role, mating ciliate pheromones (or gamones) are diffusible extracellular communication signals that distinguish different intraspecific classes of cells commonly referred to as 'mating types'. They prepare the latter for conjugation by changing their cell surface properties. The protein is Mating pheromone Er-11 (MAT11) of Euplotes raikovi.